A 415-amino-acid polypeptide reads, in one-letter code: Serine--tRNA ligase (415 aa).

231 to 233 lines the L-serine pocket; it reads TAE. 262–264 serves as a coordination point for ATP; that stretch reads RSE. E285 lines the L-serine pocket. Residue 349–352 participates in ATP binding; sequence EISS. S383 is a binding site for L-serine.

This sequence belongs to the class-II aminoacyl-tRNA synthetase family. Type-1 seryl-tRNA synthetase subfamily. As to quaternary structure, homodimer. The tRNA molecule binds across the dimer.

The protein localises to the cytoplasm. It carries out the reaction tRNA(Ser) + L-serine + ATP = L-seryl-tRNA(Ser) + AMP + diphosphate + H(+). It catalyses the reaction tRNA(Sec) + L-serine + ATP = L-seryl-tRNA(Sec) + AMP + diphosphate + H(+). It participates in aminoacyl-tRNA biosynthesis; selenocysteinyl-tRNA(Sec) biosynthesis; L-seryl-tRNA(Sec) from L-serine and tRNA(Sec): step 1/1. In terms of biological role, catalyzes the attachment of serine to tRNA(Ser). Is also able to aminoacylate tRNA(Sec) with serine, to form the misacylated tRNA L-seryl-tRNA(Sec), which will be further converted into selenocysteinyl-tRNA(Sec). In Helicobacter pylori (strain P12), this protein is Serine--tRNA ligase.